A 79-amino-acid polypeptide reads, in one-letter code: Protein NOI4 (79 aa).

Residues 31–68 are disordered; the sequence is KARDEKKTGGKPGSPGKSSEGHVKSGGGDPSKPQPKKW. Position 44 is a phosphoserine (Ser-44).

This sequence belongs to the RIN4 family. In terms of processing, proteolytic cleaved by P.syringae pv tomato AvrRpt2 after Gly-12; this cleavage is critical for subsequent proteasome-dependent elimination.

In Arabidopsis thaliana (Mouse-ear cress), this protein is Protein NOI4.